A 160-amino-acid chain; its full sequence is uncharacterized protein (160 aa).

A helical transmembrane segment spans residues 1–21 (MSIQTLIIISIVIFILWLTFT).

It belongs to the IIV-6 203L/325L family.

It is found in the membrane. This is an uncharacterized protein from Invertebrate iridescent virus 6 (IIV-6).